A 226-amino-acid polypeptide reads, in one-letter code: Urease accessory protein UreF (226 aa).

It belongs to the UreF family. UreD, UreF and UreG form a complex that acts as a GTP-hydrolysis-dependent molecular chaperone, activating the urease apoprotein by helping to assemble the nickel containing metallocenter of UreC. The UreE protein probably delivers the nickel.

Its subcellular location is the cytoplasm. Required for maturation of urease via the functional incorporation of the urease nickel metallocenter. In Nitrosospira multiformis (strain ATCC 25196 / NCIMB 11849 / C 71), this protein is Urease accessory protein UreF.